The sequence spans 339 residues: DNA-directed RNA polymerase subunit alpha (339 aa).

An alpha N-terminal domain (alpha-NTD) region spans residues 1 to 233; it reads MVREKVRIST…DLFIPFLHAE (233 aa). An alpha C-terminal domain (alpha-CTD) region spans residues 267–339; it reads IALKSIFIDQ…FTINLPKNKF (73 aa).

Belongs to the RNA polymerase alpha chain family. In plastids the minimal PEP RNA polymerase catalytic core is composed of four subunits: alpha, beta, beta', and beta''. When a (nuclear-encoded) sigma factor is associated with the core the holoenzyme is formed, which can initiate transcription.

It localises to the plastid. The protein localises to the chloroplast. It catalyses the reaction RNA(n) + a ribonucleoside 5'-triphosphate = RNA(n+1) + diphosphate. DNA-dependent RNA polymerase catalyzes the transcription of DNA into RNA using the four ribonucleoside triphosphates as substrates. The protein is DNA-directed RNA polymerase subunit alpha of Populus trichocarpa (Western balsam poplar).